The primary structure comprises 530 residues: Alkali-sensitive linkage protein 1 (530 aa).

Residues M1 to A18 form the signal peptide. The N-linked (GlcNAc...) asparagine glycan is linked to N55. Residues S69 to V90 form a disordered region. Residues N120 and N128 are each glycosylated (N-linked (GlcNAc...) asparagine).

It is found in the endoplasmic reticulum. The protein resides in the golgi apparatus. The protein localises to the secreted. Its subcellular location is the cell wall. The polypeptide is Alkali-sensitive linkage protein 1 (asl1) (Schizosaccharomyces pombe (strain 972 / ATCC 24843) (Fission yeast)).